The chain runs to 563 residues: MKYRRLSLAHARQDSGQAASNARSRRFARLLCSSIAPLALGFSADAFAADETMASPFNRGAPNDAHGNLLDEIRRGVPLRHVPASERNTRGAGGSTLADAMRRVIDSRRTAFDSPPATPASPSPSWSDDESPPPTPIATRPASRPESAARSPRHSSPPHSPPASAESPSPRSPDASPSRTPSPTFSFPSPSRTSTPRTQPPSPLRERPERSPAASPRVASPRSAHSRGSTQPPSNLSTPRYEPPTPLQEDPERTPVASPRVASPRSAHSRGSTQPPSNLSTPRYEPPTPLQEDPERTPVASPHVTPAEHAQRRPFLLQKPPQVPSWRKKAPSATLPDSHAPARPGGGQFTTPASGAAKYVAVNSGASDAFAAGVNAVAIGADARAQGQESLATGWRAQADGHRAVATGARAIASGRDAVALGAGSIADRDNTVSVGQRGSERQIVHVAPGAQGTDAVNVDQLNLAISNSNAYTNQRIGDLQQSITETARDAYSGVAAATALTMIPDVDRDKMLSIGVGGAVYKGHRAVALGGTARIGENLKVRAGVAMSAGGNTVGVGMSWQW.

A disordered region spans residues 1–20 (MKYRRLSLAHARQDSGQAAS). The signal sequence occupies residues 1 to 48 (MKYRRLSLAHARQDSGQAASNARSRRFARLLCSSIAPLALGFSADAFA). Residues 61–472 (APNDAHGNLL…NLAISNSNAY (412 aa)) are surface exposed passenger domain. Residues 65–82 (AHGNLLDEIRRGVPLRHV) form the WH2 domain. Residues 96 to 130 (TLADAMRRVIDSRRTAFDSPPATPASPSPSWSDDE) are central and acidic domains. Positions 109-350 (RTAFDSPPAT…PARPGGGQFT (242 aa)) are disordered. Composition is skewed to low complexity over residues 138–150 (ATRP…SAAR), 162–197 (PASA…STPR), and 211–227 (SPAA…AHSR). 2 stretches are compositionally biased toward polar residues: residues 228 to 238 (GSTQPPSNLST) and 269 to 281 (SRGS…NLST). The segment at 473 to 509 (TNQRIGDLQQSITETARDAYSGVAAATALTMIPDVDR) is outer membrane translocation of the passenger domain. Transmembrane regions (beta stranded) follow at residues 510–519 (DKMLSIGVGG), 525–536 (HRAVALGGTARI), 543–549 (RAGVAMS), and 553–563 (NTVGVGMSWQW). The interval 510-563 (DKMLSIGVGGAVYKGHRAVALGGTARIGENLKVRAGVAMSAGGNTVGVGMSWQW) is translocator domain.

Belongs to the autotransporter-2 (AT-2) (TC 1.B.40) family. As to quaternary structure, homotrimer. Interacts with host G-actin; the interaction is direct. Interacts (via central and acidic domains) with host ACTR2/ARP2 and ACTR3/ARP3.

It is found in the cell outer membrane. It localises to the cell surface. During host cell infection, required for actin-based intracellular motility. Mediates actin tail formation at one pole of the bacteria surface by recruiting host Arp2/3 (ACTR3/ARP3-ACTR2/ARP2) which leads to actin polymerization which provides the propulsive force for intracellular movement and intercellular dissemination of the bacterium. The protein is Autotransporter BimA of Burkholderia thailandensis (strain ATCC 700388 / DSM 13276 / CCUG 48851 / CIP 106301 / E264).